The following is a 1525-amino-acid chain: Dicer-like protein 1 (1525 aa).

Positions 37-52 (DLQEDDGSSDESDNDE) are enriched in acidic residues. The tract at residues 37 to 65 (DLQEDDGSSDESDNDEREDHSKTGVSQQR) is disordered. A Helicase ATP-binding domain is found at 124–305 (LFERAKVQNT…DEATRLEKLL (182 aa)). An ATP-binding site is contributed by 137-144 (LDTGSGKT). Residues 250 to 253 (DEAH) carry the DEAH box motif. The Helicase C-terminal domain occupies 439–605 (QLSPKVQVLR…SFCRTLPEDR (167 aa)). One can recognise a Dicer dsRNA-binding fold domain in the interval 641-731 (ATAILARYAS…NSIYHRRLPA (91 aa)). Residues 881–1009 (ESLTYVRDND…ICIEPLKVSA (129 aa)) form the PAZ domain. RNase III domains are found at residues 1032–1192 (LISL…LSGG) and 1243–1394 (SRKI…VDSD). 3 residues coordinate Mg(2+): E1283, D1380, and E1383. The 69-residue stretch at 1428 to 1496 (TFLHNRLTNE…SEKALAVLDE (69 aa)) folds into the DRBM domain. C1440, H1467, C1508, and C1510 together coordinate Zn(2+).

This sequence belongs to the helicase family. Dicer subfamily. It depends on Mg(2+) as a cofactor. Mn(2+) serves as cofactor.

Functionally, dicer-like endonuclease involved in cleaving double-stranded RNA in the RNA interference (RNAi) pathway. Produces 21 to 25 bp dsRNAs (siRNAs) which target the selective destruction of homologous RNAs leading to sequence-specific suppression of gene expression, called post-transcriptional gene silencing (PTGS). Part of a broad host defense response against viral infection and transposons. The polypeptide is Dicer-like protein 1 (dcl1) (Aspergillus niger (strain ATCC MYA-4892 / CBS 513.88 / FGSC A1513)).